The sequence spans 122 residues: Large ribosomal subunit protein uL14 (122 aa).

Belongs to the universal ribosomal protein uL14 family. Part of the 50S ribosomal subunit. Forms a cluster with proteins L3 and L19. In the 70S ribosome, L14 and L19 interact and together make contacts with the 16S rRNA in bridges B5 and B8.

Binds to 23S rRNA. Forms part of two intersubunit bridges in the 70S ribosome. This Nitrosomonas europaea (strain ATCC 19718 / CIP 103999 / KCTC 2705 / NBRC 14298) protein is Large ribosomal subunit protein uL14.